The following is a 130-amino-acid chain: Small ribosomal subunit protein uS11c (130 aa).

This sequence belongs to the universal ribosomal protein uS11 family. Part of the 30S ribosomal subunit.

It localises to the plastid. The protein resides in the chloroplast. In Chara vulgaris (Common stonewort), this protein is Small ribosomal subunit protein uS11c.